We begin with the raw amino-acid sequence, 753 residues long: Replication restart protein PriA (753 aa).

Residues 228–395 (SLITTKFQTC…LSKKYTLSVL (168 aa)) form the Helicase ATP-binding domain. 241 to 248 (GVTGSGKT) provides a ligand contact to ATP. Positions 337–340 (DEEH) match the DEAH box motif. Zn(2+) contacts are provided by Cys458, Cys461, Cys467, Cys470, Cys485, Cys488, Cys499, and Cys502. Residues 491 to 646 (RLSKPITSCP…DFPAFYKEEI (156 aa)) form the Helicase C-terminal domain.

The protein belongs to the helicase family. PriA subfamily. As to quaternary structure, component of the replication restart primosome. Zn(2+) serves as cofactor.

The catalysed reaction is Couples ATP hydrolysis with the unwinding of duplex DNA by translocating in the 3'-5' direction.. It carries out the reaction ATP + H2O = ADP + phosphate + H(+). Functionally, initiates the restart of stalled replication forks, which reloads the replicative helicase on sites other than the origin of replication. Recognizes and binds to abandoned replication forks and remodels them to uncover a helicase loading site. Promotes assembly of the primosome at these replication forks. The chain is Replication restart protein PriA from Chlamydia muridarum (strain MoPn / Nigg).